Here is a 276-residue protein sequence, read N- to C-terminus: MATRKLKPTSPGRRFQTISTFEEITKSTPEKSLTKGLTKKAGRNNNGRVTSRRRGGGVKRLYRIIDFKRNKVEVPATVASIEYDPNRSARIALLHYADGEKRYILCPVGLNKGDKILAGEKADIKPGNALLLKNIPVGTIVHNIELYPGKGGQFCRAAGTYAQLIAKEGKYALLRMPSGEVRKVLATCCATVGQVGNIHHENITLGKAGRNRWLGRRPKVRGVAMNPIDHPLGGGEGRSSGGRHPVSPWGMPAKGYKTRSKKKPSSKLIVKRRGQR.

2 disordered regions span residues 29 to 54 (PEKS…SRRR) and 224 to 276 (AMNP…RGQR). The segment covering 256 to 276 (YKTRSKKKPSSKLIVKRRGQR) has biased composition (basic residues).

It belongs to the universal ribosomal protein uL2 family. In terms of assembly, part of the 50S ribosomal subunit. Forms a bridge to the 30S subunit in the 70S ribosome.

In terms of biological role, one of the primary rRNA binding proteins. Required for association of the 30S and 50S subunits to form the 70S ribosome, for tRNA binding and peptide bond formation. It has been suggested to have peptidyltransferase activity; this is somewhat controversial. Makes several contacts with the 16S rRNA in the 70S ribosome. This is Large ribosomal subunit protein uL2 from Maridesulfovibrio salexigens (strain ATCC 14822 / DSM 2638 / NCIMB 8403 / VKM B-1763) (Desulfovibrio salexigens).